A 245-amino-acid polypeptide reads, in one-letter code: 1-(5-phosphoribosyl)-5-[(5-phosphoribosylamino)methylideneamino] imidazole-4-carboxamide isomerase (245 aa).

D8 acts as the Proton acceptor in catalysis. D130 (proton donor) is an active-site residue.

It belongs to the HisA/HisF family.

The protein localises to the cytoplasm. It catalyses the reaction 1-(5-phospho-beta-D-ribosyl)-5-[(5-phospho-beta-D-ribosylamino)methylideneamino]imidazole-4-carboxamide = 5-[(5-phospho-1-deoxy-D-ribulos-1-ylimino)methylamino]-1-(5-phospho-beta-D-ribosyl)imidazole-4-carboxamide. Its pathway is amino-acid biosynthesis; L-histidine biosynthesis; L-histidine from 5-phospho-alpha-D-ribose 1-diphosphate: step 4/9. This chain is 1-(5-phosphoribosyl)-5-[(5-phosphoribosylamino)methylideneamino] imidazole-4-carboxamide isomerase, found in Pseudomonas fluorescens (strain ATCC BAA-477 / NRRL B-23932 / Pf-5).